Consider the following 170-residue polypeptide: 3-hydroxyanthranilate 3,4-dioxygenase (170 aa).

Position 44 (Arg-44) interacts with O2. Residues His-48, Glu-54, and His-92 each contribute to the Fe cation site. Glu-54 is a substrate binding site. Residues Arg-96 and Glu-106 each coordinate substrate. 4 residues coordinate a divalent metal cation: Cys-121, Cys-124, Cys-158, and Cys-161.

This sequence belongs to the 3-HAO family. The cofactor is Fe(2+).

It localises to the cytoplasm. It catalyses the reaction 3-hydroxyanthranilate + O2 = (2Z,4Z)-2-amino-3-carboxymuconate 6-semialdehyde. The protein operates within cofactor biosynthesis; NAD(+) biosynthesis; quinolinate from L-kynurenine: step 3/3. Functionally, catalyzes the oxidative ring opening of 3-hydroxyanthranilate to 2-amino-3-carboxymuconate semialdehyde, which spontaneously cyclizes to quinolinate. The sequence is that of 3-hydroxyanthranilate 3,4-dioxygenase from Scheffersomyces stipitis (strain ATCC 58785 / CBS 6054 / NBRC 10063 / NRRL Y-11545) (Yeast).